The following is a 624-amino-acid chain: DNA damage response protein Mdb1 (624 aa).

3 disordered regions span residues 177–237, 249–386, and 591–624; these read ERIP…DDES, GETK…KNKH, and IGKRNVSKASRTGQGRKRSSRSSWNKPSAKEQRT. 2 stretches are compositionally biased toward basic and acidic residues: residues 200–217 and 225–235; these read DEKLVLDGQHVEGDHSSD and EDQKQLNKTDD. Over residues 250–263 the composition is skewed to polar residues; the sequence is ETKSPSSVSQSLSG. 2 positions are modified to phosphoserine: S253 and S283. Positions 294-305 are enriched in low complexity; the sequence is NISDSSIKNNSI. Basic and acidic residues-rich tracts occupy residues 306–316 and 325–352; these read HSDEVNPEVRP and EESKRSAPEIALKEKESTSQDESNREAE. A compositionally biased stretch (polar residues) spans 356–386; that stretch reads ISTNYSFPSSSLEDQPDKNVQSSAVENKNKH. The 93-residue stretch at 376–468 folds into the BRCT domain; the sequence is QSSAVENKNK…KVLDFRSYKY (93 aa).

In terms of assembly, homodimer. Interacts (via BRCT domain) with hta1 peptide containing the S/T-Q motif in vitro; this interaction requires phosphorylation of the hta1 peptide at the S/T-Q motif.

The protein localises to the nucleus. It is found in the chromosome. It localises to the cytoplasm. Its subcellular location is the cytoskeleton. The protein resides in the spindle. Its function is as follows. Involved in DNA damage response (DDR) mediated through its interaction with phosphorylated H2A proteins hta1 and hta2 which mark the discrete foci of DNA damage. The chain is DNA damage response protein Mdb1 from Schizosaccharomyces pombe (strain 972 / ATCC 24843) (Fission yeast).